A 153-amino-acid polypeptide reads, in one-letter code: Endoribonuclease YbeY (153 aa).

The Zn(2+) site is built by His112, His116, and His122.

The protein belongs to the endoribonuclease YbeY family. Zn(2+) serves as cofactor.

The protein localises to the cytoplasm. Functionally, single strand-specific metallo-endoribonuclease involved in late-stage 70S ribosome quality control and in maturation of the 3' terminus of the 16S rRNA. The polypeptide is Endoribonuclease YbeY (Persephonella marina (strain DSM 14350 / EX-H1)).